Reading from the N-terminus, the 460-residue chain is A-type ATP synthase subunit B (460 aa).

Belongs to the ATPase alpha/beta chains family. As to quaternary structure, has multiple subunits with at least A(3), B(3), C, D, E, F, H, I and proteolipid K(x).

It is found in the cell membrane. Functionally, component of the A-type ATP synthase that produces ATP from ADP in the presence of a proton gradient across the membrane. The B chain is a regulatory subunit. The chain is A-type ATP synthase subunit B from Methanosarcina barkeri (strain Fusaro / DSM 804).